We begin with the raw amino-acid sequence, 347 residues long: Putative [LysW]-L-2-aminoadipate/[LysW]-L-glutamate phosphate reductase (347 aa).

9-12 (SGYI) is an NADP(+) binding site. Cysteine 149 is a catalytic residue. Position 314 (asparagine 314) interacts with NADP(+).

The protein belongs to the NAGSA dehydrogenase family. Type 1 subfamily. LysY sub-subfamily.

It is found in the cytoplasm. It carries out the reaction [amino-group carrier protein]-C-terminal-N-(1-carboxy-5-oxopentan-1-yl)-L-glutamine + phosphate + NADP(+) = [amino-group carrier protein]-C-terminal-N-(1-carboxy-5-phosphooxy-5-oxopentan-1-yl)-L-glutamine + NADPH + H(+). It catalyses the reaction [amino-group carrier protein]-C-terminal-gamma-(L-glutamyl-5-semialdehyde)-L-glutamate + phosphate + NADP(+) = [amino-group carrier protein]-C-terminal-gamma-(5-phospho-L-glutamyl)-L-glutamate + NADPH + H(+). The protein operates within amino-acid biosynthesis; L-lysine biosynthesis via AAA pathway; L-lysine from L-alpha-aminoadipate (Thermus route): step 3/5. Its pathway is amino-acid biosynthesis; L-arginine biosynthesis. Functionally, involved in both the arginine and lysine biosynthetic pathways. The protein is Putative [LysW]-L-2-aminoadipate/[LysW]-L-glutamate phosphate reductase of Picrophilus torridus (strain ATCC 700027 / DSM 9790 / JCM 10055 / NBRC 100828 / KAW 2/3).